The primary structure comprises 716 residues: uncharacterized protein (716 aa).

Disordered regions lie at residues 84–103 and 153–189; these read SPSI…ERYP and VTDE…SQGQ. The residue at position 97 (S97) is a Phosphoserine. Residues K201, K204, K237, K283, and K626 each participate in a glycyl lysine isopeptide (Lys-Gly) (interchain with G-Cter in SUMO2) cross-link.

This is an uncharacterized protein from Mus musculus (Mouse).